A 794-amino-acid polypeptide reads, in one-letter code: uncharacterized protein (794 aa).

A signal peptide spans 1–22; that stretch reads MKLKYGTIIFSGLLGVSAILAA. Cys-23 is lipidated: N-palmitoyl cysteine. Cys-23 carries the S-diacylglycerol cysteine lipid modification. Positions 177–196 are enriched in polar residues; the sequence is SSGKTQVSQTSSGSNQQKTL. 3 disordered regions span residues 177–208, 220–257, and 466–506; these read SSGKTQVSQTSSGSNQQKTLQKPLKIDTSDSS, AKNNGKKANNSKSNRRSTDQSTQTHNDQGDASESDKKI, and KSTD…ENNS. Low complexity predominate over residues 220 to 231; sequence AKNNGKKANNSK. Residues 238–250 show a composition bias toward polar residues; the sequence is DQSTQTHNDQGDA.

It belongs to the MG185/MG260 family.

It is found in the cell membrane. This is an uncharacterized protein from Mycoplasma pneumoniae (strain ATCC 29342 / M129 / Subtype 1) (Mycoplasmoides pneumoniae).